Here is a 517-residue protein sequence, read N- to C-terminus: Enantioselective amidase (517 aa).

Residues lysine 96 and serine 173 each act as charge relay system in the active site. Serine 197 acts as the Acyl-ester intermediate in catalysis.

The protein belongs to the amidase family. In terms of assembly, homooctamer.

It catalyses the reaction a monocarboxylic acid amide + H2O = a monocarboxylate + NH4(+). The sequence is that of Enantioselective amidase (amdA) from Rhodococcus rhodochrous.